Reading from the N-terminus, the 272-residue chain is Undecaprenyl-diphosphatase (272 aa).

The next 7 helical transmembrane spans lie at 6–26 (SLLI…LPVS), 45–65 (AKTF…VMFW), 92–112 (THIL…HDVI), 115–135 (LFYP…LLAA), 189–209 (YAAS…ATVL), 221–241 (ADVP…LIAI), and 251–271 (ISFI…YMVF).

This sequence belongs to the UppP family.

It localises to the cell inner membrane. It carries out the reaction di-trans,octa-cis-undecaprenyl diphosphate + H2O = di-trans,octa-cis-undecaprenyl phosphate + phosphate + H(+). Its function is as follows. Catalyzes the dephosphorylation of undecaprenyl diphosphate (UPP). Confers resistance to bacitracin. The sequence is that of Undecaprenyl-diphosphatase from Pectobacterium atrosepticum (strain SCRI 1043 / ATCC BAA-672) (Erwinia carotovora subsp. atroseptica).